The chain runs to 678 residues: MKASLLVPRRALLFGQLLPPKYSWYSVKRWQSQLTFRNKSKRNTNRIMLSVVSSLNPDSLIAPLLCVSLDNRKYLIGSMGELTQMKFRSQASNYGGKSVSVFLMPPSLQSLNAWGITAGLFGYLQSSGIQNTWGLHAPKPVISIIKKSHHLFSGSPLRLDLNSFSSEDNADATNSFYLDEPEFCTIKGNIYSNWSFLSFNSKEAAGVFNADKALALGVPFGPSNGKLCAGEAVLSKDGTTWIYPHQVVGPPRKRQYFYVLGCSSLSALNQMSKHVDSFSDVYPTCIIHILEKGIWGPEYIKFLSHPKFSRAQHFISCIELASNNPVFQRNKGRNVLPACRDFAAFDIKPSTLDTQTQLPENTYVLKEETSMVLYDEQCKISESPSYSPVKLAKKFSSFNPLPFENEGYTLDVLGTSATCPTWRRSLSSYSVAIDGTVIMLDCGEGAISQFFRQYGTNTEPMLRKLKAIFITHLHSDHYLGLLNVLQAWNKANTNNSMHINIIGPKFLWQWLQRLKSPANLQALLNRIIFIIAKETVTTPLQLTSDLSISSVPSIHINDSYSCIISHTKYGKLVYSGDTRPNEKLVKAGIGASLLLHESTFEDDLKHEAIQRQHSTASEALSVAQSMKAKALILTHFSQRSYDADFLPPDWTIYPKSKTIYANDGLQWQQFQSKQRETI.

Residues 1 to 37 (MKASLLVPRRALLFGQLLPPKYSWYSVKRWQSQLTFR) constitute a mitochondrion transit peptide.

Belongs to the RNase Z family. Zn(2+) is required as a cofactor.

Its subcellular location is the mitochondrion. It is found in the cytoplasm. The catalysed reaction is Endonucleolytic cleavage of RNA, removing extra 3' nucleotides from tRNA precursor, generating 3' termini of tRNAs. A 3'-hydroxy group is left at the tRNA terminus and a 5'-phosphoryl group is left at the trailer molecule.. Functionally, zinc phosphodiesterase, which displays some tRNA 3'-processing endonuclease activity. May be involved in tRNA maturation, by removing a 3'-trailer from precursor tRNA. The sequence is that of Ribonuclease Z 2, mitochondrial (trz2) from Schizosaccharomyces pombe (strain 972 / ATCC 24843) (Fission yeast).